Reading from the N-terminus, the 451-residue chain is Proline--tRNA ligase (451 aa).

This sequence belongs to the class-II aminoacyl-tRNA synthetase family. ProS type 2 subfamily. Homodimer.

It localises to the cytoplasm. It catalyses the reaction tRNA(Pro) + L-proline + ATP = L-prolyl-tRNA(Pro) + AMP + diphosphate. Catalyzes the attachment of proline to tRNA(Pro) in a two-step reaction: proline is first activated by ATP to form Pro-AMP and then transferred to the acceptor end of tRNA(Pro). In Ruegeria sp. (strain TM1040) (Silicibacter sp.), this protein is Proline--tRNA ligase.